We begin with the raw amino-acid sequence, 260 residues long: Universal stress protein PHOS34 (260 aa).

The transit peptide at 1-33 (MNPDSDYPHLPNIKIHHPSSPRHSHHHSSSTPS) directs the protein to the chloroplast. Residues 1–42 (MNPDSDYPHLPNIKIHHPSSPRHSHHHSSSTPSAATPTPTAG) are disordered. The segment covering 14–28 (KIHHPSSPRHSHHHS) has biased composition (basic residues). Residue P18 participates in ATP binding. S20 carries the post-translational modification Phosphoserine; by MAPK3 and MAPK6. Residues 29-41 (SSTPSAATPTPTA) are compositionally biased toward low complexity. V80 is an ATP binding site. The disordered stretch occupies residues 92-118 (GPLPLQTPPPPSAATDPGAQPKPSQED). ATP-binding positions include 170–179 (GSRGFGAEKR) and 187–189 (SVS). Residues 209 to 260 (RDGPAPPGNVGATREAIVTVKSRRDDDDDDDEDHEAKIAAAASDHHEHIKDE) form a disordered region. S230 carries the post-translational modification Phosphoserine. Residues 251-260 (SDHHEHIKDE) are compositionally biased toward basic and acidic residues.

It belongs to the universal stress protein A family. Post-translationally, phosphorylated by MAPK3 and MAPK6 after pathogenic elicitation (e.g. bacterial flg22, Phytophthora infestans zoospores and xylanase).

Its subcellular location is the plastid. It is found in the chloroplast. This is Universal stress protein PHOS34 from Arabidopsis thaliana (Mouse-ear cress).